We begin with the raw amino-acid sequence, 424 residues long: Serine--tRNA ligase (424 aa).

An L-serine-binding site is contributed by 231 to 233 (TAE). 262–264 (RAE) contributes to the ATP binding site. E285 provides a ligand contact to L-serine. 349-352 (EISS) contacts ATP. S385 serves as a coordination point for L-serine.

Belongs to the class-II aminoacyl-tRNA synthetase family. Type-1 seryl-tRNA synthetase subfamily. As to quaternary structure, homodimer. The tRNA molecule binds across the dimer.

The protein resides in the cytoplasm. It carries out the reaction tRNA(Ser) + L-serine + ATP = L-seryl-tRNA(Ser) + AMP + diphosphate + H(+). The enzyme catalyses tRNA(Sec) + L-serine + ATP = L-seryl-tRNA(Sec) + AMP + diphosphate + H(+). It functions in the pathway aminoacyl-tRNA biosynthesis; selenocysteinyl-tRNA(Sec) biosynthesis; L-seryl-tRNA(Sec) from L-serine and tRNA(Sec): step 1/1. In terms of biological role, catalyzes the attachment of serine to tRNA(Ser). Is also able to aminoacylate tRNA(Sec) with serine, to form the misacylated tRNA L-seryl-tRNA(Sec), which will be further converted into selenocysteinyl-tRNA(Sec). The protein is Serine--tRNA ligase of Geobacillus thermodenitrificans (strain NG80-2).